A 113-amino-acid chain; its full sequence is UPF0102 protein CHU_0465 (113 aa).

The protein belongs to the UPF0102 family.

The polypeptide is UPF0102 protein CHU_0465 (Cytophaga hutchinsonii (strain ATCC 33406 / DSM 1761 / CIP 103989 / NBRC 15051 / NCIMB 9469 / D465)).